We begin with the raw amino-acid sequence, 369 residues long: UPF0284 protein AM1_5137 (369 aa).

Belongs to the UPF0284 family.

The chain is UPF0284 protein AM1_5137 from Acaryochloris marina (strain MBIC 11017).